The following is a 212-amino-acid chain: uncharacterized protein (212 aa).

This is an uncharacterized protein from Rickettsia prowazekii (strain Madrid E).